A 499-amino-acid polypeptide reads, in one-letter code: Rhodopsin, GQ-coupled (499 aa).

Residues 1 to 50 (MADNKSTLPGLPDINGTLNRSMTPNTGWEGPYDMSVHLHWTQFPPVTEEW) are Extracellular-facing. N-linked (GlcNAc...) asparagine glycans are attached at residues Asn4, Asn15, and Asn19. Residues 51 to 75 (HYIIGVYITIVGLLGIMGNTTVVYI) form a helical membrane-spanning segment. Topologically, residues 76–87 (FSNTKSLRSPSN) are cytoplasmic. Residues 88-114 (LFVVNLAVSDLIFSAVNGFPLLTVSSF) form a helical membrane-spanning segment. Topologically, residues 115-128 (HQKWIFGSLFCQLY) are extracellular. A disulfide bond links Cys125 and Cys203. The chain crosses the membrane as a helical span at residues 129 to 148 (GFVGGVFGLMSINTLTAISI). Residues 149 to 168 (DRYVVITKPLQASQTMTRRK) lie on the Cytoplasmic side of the membrane. Residues 169–192 (VHLMIVIVWVLSILLSIPPFFGWG) form a helical membrane-spanning segment. At 193 to 216 (AYIPEGFQTSCTFDYLTKTARTRT) the chain is on the extracellular side. A helical transmembrane segment spans residues 217-244 (YIVVLYLFGFLIPLIIIGVCYVLIIRGV). At 245 to 278 (RRHDQKMLTITRSMKTEDARANNKRARSELRISK) the chain is on the cytoplasmic side. Residues 279–302 (IAMTVTCLFIISWSPYAIIALIAQ) traverse the membrane as a helical segment. Topologically, residues 303–310 (FGPAHWIT) are extracellular. Residues 311-335 (PLVSELPMMLAKSSSMHNPVVYALS) traverse the membrane as a helical segment. Lys322 is modified (N6-(retinylidene)lysine). The Cytoplasmic segment spans residues 336–499 (HPKFRKALYQ…QRVNGLTFNS (164 aa)). Residues Cys353 and Cys354 are each lipidated (S-palmitoyl cysteine).

It belongs to the G-protein coupled receptor 1 family. Opsin subfamily. Post-translationally, phosphorylated on some or all of the serine and threonine residues present in the C-terminal region. In terms of tissue distribution, retina. Expressed in the depolarizing cell layer of the photoreceptor cells distant from the lens.

It localises to the membrane. Its function is as follows. Visual pigments such as rhodopsin and porphyropsin are light-absorbing molecules that mediate vision. Rhodopsin consists of an apoprotein, opsin, covalently linked to 11-cis-retinal. This receptor is coupled to the activation of phospholipase C. Porphyropsin consists of opsin covalently linked to 11-cis 3,4-didehydroretinal. This Mizuhopecten yessoensis (Japanese scallop) protein is Rhodopsin, GQ-coupled (SCOP1).